Consider the following 235-residue polypeptide: Large ribosomal subunit protein uL1 (235 aa).

This sequence belongs to the universal ribosomal protein uL1 family. Part of the 50S ribosomal subunit.

Functionally, binds directly to 23S rRNA. The L1 stalk is quite mobile in the ribosome, and is involved in E site tRNA release. In terms of biological role, protein L1 is also a translational repressor protein, it controls the translation of the L11 operon by binding to its mRNA. This is Large ribosomal subunit protein uL1 from Mycobacterium leprae (strain Br4923).